Here is a 535-residue protein sequence, read N- to C-terminus: Dimethylaniline monooxygenase [N-oxide-forming] 2 (535 aa).

Alanine 2 carries the post-translational modification N-acetylalanine. Residues 9–13 (GAGVS), glutamate 32, 40–41 (LW), and 61–62 (NT) each bind FAD. NADP(+) is bound by residues 60-61 (TN) and 195-198 (SASD). Lysine 492 is covalently cross-linked (Glycyl lysine isopeptide (Lys-Gly) (interchain with G-Cter in SUMO)). The chain crosses the membrane as a helical span at residues 510–530 (FPVSFLLKFLGLFALVLAFLF).

Belongs to the FMO family. The cofactor is FAD. Mg(2+) is required as a cofactor. Lung.

It is found in the microsome membrane. The protein localises to the endoplasmic reticulum membrane. It carries out the reaction N,N-dimethylaniline + NADPH + O2 + H(+) = N,N-dimethylaniline N-oxide + NADP(+) + H2O. In terms of biological role, catalyzes the oxidative metabolism of numerous xenobiotics, including mainly therapeutic drugs and insecticides that contain a soft nucleophile, most commonly nitrogen and sulfur and participates to their bioactivation. Most drug substrates are tertiary amines such as prochlorperazine and trifluoperazine which are N-oxygenated to form the N-oxide, or sulfides such as thiourea and ethionamide, which are S-oxygenated to the sulfoxide. Others include primary alkylamines such as N-dodecylamine and octan-1-amine that are sequentially monooxygenated to oximes through intermediate hydroxylamines and both steps are NADPH- and oxygen-dependent. Also metabolized N-Deacetyl ketoconazole (DAK) to N-hydroxy-DAK and appears to further metabolizes N-hydroxy-DAK to two others metabolites. Also catalyzes S-oxygenation of the thioether-containing organophosphate insecticides, phorate and disulfoton. This chain is Dimethylaniline monooxygenase [N-oxide-forming] 2, found in Oryctolagus cuniculus (Rabbit).